Here is a 207-residue protein sequence, read N- to C-terminus: Thiamine-phosphate synthase (207 aa).

4-amino-2-methyl-5-(diphosphooxymethyl)pyrimidine contacts are provided by residues 37–41 and N69; that span reads QLREK. Mg(2+) is bound by residues D70 and D89. A 4-amino-2-methyl-5-(diphosphooxymethyl)pyrimidine-binding site is contributed by S108. Residue 134–136 coordinates 2-[(2R,5Z)-2-carboxy-4-methylthiazol-5(2H)-ylidene]ethyl phosphate; sequence TGS. A 4-amino-2-methyl-5-(diphosphooxymethyl)pyrimidine-binding site is contributed by K137. Residues G165 and 185–186 contribute to the 2-[(2R,5Z)-2-carboxy-4-methylthiazol-5(2H)-ylidene]ethyl phosphate site; that span reads IS.

It belongs to the thiamine-phosphate synthase family. Mg(2+) is required as a cofactor.

The enzyme catalyses 2-[(2R,5Z)-2-carboxy-4-methylthiazol-5(2H)-ylidene]ethyl phosphate + 4-amino-2-methyl-5-(diphosphooxymethyl)pyrimidine + 2 H(+) = thiamine phosphate + CO2 + diphosphate. It carries out the reaction 2-(2-carboxy-4-methylthiazol-5-yl)ethyl phosphate + 4-amino-2-methyl-5-(diphosphooxymethyl)pyrimidine + 2 H(+) = thiamine phosphate + CO2 + diphosphate. It catalyses the reaction 4-methyl-5-(2-phosphooxyethyl)-thiazole + 4-amino-2-methyl-5-(diphosphooxymethyl)pyrimidine + H(+) = thiamine phosphate + diphosphate. Its pathway is cofactor biosynthesis; thiamine diphosphate biosynthesis; thiamine phosphate from 4-amino-2-methyl-5-diphosphomethylpyrimidine and 4-methyl-5-(2-phosphoethyl)-thiazole: step 1/1. Condenses 4-methyl-5-(beta-hydroxyethyl)thiazole monophosphate (THZ-P) and 2-methyl-4-amino-5-hydroxymethyl pyrimidine pyrophosphate (HMP-PP) to form thiamine monophosphate (TMP). This is Thiamine-phosphate synthase from Desulfitobacterium hafniense (strain Y51).